The following is a 234-amino-acid chain: Sugar fermentation stimulation protein homolog (234 aa).

It belongs to the SfsA family.

The chain is Sugar fermentation stimulation protein homolog from Pectobacterium atrosepticum (strain SCRI 1043 / ATCC BAA-672) (Erwinia carotovora subsp. atroseptica).